The primary structure comprises 451 residues: Serine--tRNA ligase (451 aa).

247 to 249 contributes to the L-serine binding site; it reads TAE. ATP contacts are provided by residues 278 to 280 and valine 294; that span reads RKE. Glutamate 301 provides a ligand contact to L-serine. 365 to 368 lines the ATP pocket; the sequence is ELAS. Threonine 400 is an L-serine binding site.

Belongs to the class-II aminoacyl-tRNA synthetase family. Type-1 seryl-tRNA synthetase subfamily. In terms of assembly, homodimer. The tRNA molecule binds across the dimer.

It localises to the cytoplasm. The catalysed reaction is tRNA(Ser) + L-serine + ATP = L-seryl-tRNA(Ser) + AMP + diphosphate + H(+). The enzyme catalyses tRNA(Sec) + L-serine + ATP = L-seryl-tRNA(Sec) + AMP + diphosphate + H(+). Its pathway is aminoacyl-tRNA biosynthesis; selenocysteinyl-tRNA(Sec) biosynthesis; L-seryl-tRNA(Sec) from L-serine and tRNA(Sec): step 1/1. Its function is as follows. Catalyzes the attachment of serine to tRNA(Ser). Is also able to aminoacylate tRNA(Sec) with serine, to form the misacylated tRNA L-seryl-tRNA(Sec), which will be further converted into selenocysteinyl-tRNA(Sec). In Pyrobaculum aerophilum (strain ATCC 51768 / DSM 7523 / JCM 9630 / CIP 104966 / NBRC 100827 / IM2), this protein is Serine--tRNA ligase.